Consider the following 71-residue polypeptide: Equinin B (71 aa).

The N-terminal stretch at 1–11 (MAVIMVDQAEG) is a signal peptide. Positions 46 to 71 (GDEPQQMALDDESDPLVILPNNYNDY) are excised as a propeptide.

Contains 4 disulfide bonds.

The protein resides in the secreted. The protein localises to the target cell membrane. Its function is as follows. Antimicrobial peptide with inhibitory activity against both Gram-positive and Gram-negative bacteria (E.coli (MIC=0.25 ug/ml), M.lysodeikticus (MIC=0.25 ug/ml), and V.alginolyticus (MIC=0.25 ug/ml)). Does not show hemolytic activity. The polypeptide is Equinin B (Actinia equina (Beadlet anemone)).